Reading from the N-terminus, the 939-residue chain is Nonsense-mediated mRNA decay factor SMG8 (939 aa).

Disordered stretches follow at residues 561–600 (KICT…QLSP) and 617–645 (LNES…ADTE). Acidic residues predominate over residues 567–587 (GEDENEDGETEEADEDTEEKE). The span at 617–629 (LNESQESSEQLSG) shows a compositional bias: low complexity.

The protein belongs to the SMG8 family.

Functionally, involved in nonsense-mediated decay (NMD) of mRNAs containing premature stop codons. Probable component of kinase complex containing nonC and recruited to stalled ribosomes. The polypeptide is Nonsense-mediated mRNA decay factor SMG8 (Drosophila ananassae (Fruit fly)).